An 88-amino-acid polypeptide reads, in one-letter code: uncharacterized protein (88 aa).

This is an uncharacterized protein from Sinorhizobium fredii (strain NBRC 101917 / NGR234).